Here is a 761-residue protein sequence, read N- to C-terminus: 1,4-alpha-glucan branching enzyme GlgB (761 aa).

The active-site Nucleophile is Asp431. Residue Glu484 is the Proton donor of the active site.

It belongs to the glycosyl hydrolase 13 family. GlgB subfamily. Monomer.

The catalysed reaction is Transfers a segment of a (1-&gt;4)-alpha-D-glucan chain to a primary hydroxy group in a similar glucan chain.. The protein operates within glycan biosynthesis; glycogen biosynthesis. In terms of biological role, catalyzes the formation of the alpha-1,6-glucosidic linkages in glycogen by scission of a 1,4-alpha-linked oligosaccharide from growing alpha-1,4-glucan chains and the subsequent attachment of the oligosaccharide to the alpha-1,6 position. The protein is 1,4-alpha-glucan branching enzyme GlgB of Synechococcus sp. (strain WH7803).